A 104-amino-acid chain; its full sequence is Large ribosomal subunit protein uL24 (104 aa).

The protein belongs to the universal ribosomal protein uL24 family. As to quaternary structure, part of the 50S ribosomal subunit.

In terms of biological role, one of two assembly initiator proteins, it binds directly to the 5'-end of the 23S rRNA, where it nucleates assembly of the 50S subunit. Functionally, one of the proteins that surrounds the polypeptide exit tunnel on the outside of the subunit. In Methylobacterium radiotolerans (strain ATCC 27329 / DSM 1819 / JCM 2831 / NBRC 15690 / NCIMB 10815 / 0-1), this protein is Large ribosomal subunit protein uL24.